Consider the following 870-residue polypeptide: Linoleate 9S-lipoxygenase 2 (870 aa).

The region spanning 32 to 158 is the PLAT domain; the sequence is NDFGATVIDG…KYRYNRVFFS (127 aa). The Lipoxygenase domain maps to 161-870; that stretch reads TSLPSKMPAA…ARGIPNSISI (710 aa). The tract at residues 203 to 243 is disordered; that stretch reads YNDLGEPDSGNPRPVLGGSPDRPYPRRGRTGRKPTKTDPTA. Over residues 227 to 236 the composition is skewed to basic residues; that stretch reads PRRGRTGRKP. The Fe cation site is built by His-525, His-530, His-716, Asn-720, and Ile-870.

It belongs to the lipoxygenase family. Monomer. The cofactor is Fe cation.

It is found in the cytoplasm. The catalysed reaction is (9Z,12Z)-octadecadienoate + O2 = (9S)-hydroperoxy-(10E,12Z)-octadecadienoate. It participates in lipid metabolism; oxylipin biosynthesis. Functionally, plant lipoxygenase may be involved in a number of diverse aspects of plant physiology including growth and development, pest resistance, and senescence or responses to wounding. Catalyzes the hydroperoxidation of lipids containing a cis,cis-1,4-pentadiene structure. The chain is Linoleate 9S-lipoxygenase 2 (LOX1.1) from Oryza sativa subsp. japonica (Rice).